A 598-amino-acid polypeptide reads, in one-letter code: Elongation factor 4 (598 aa).

In terms of domain architecture, tr-type G spans 2–184 (KNIRNFSIIA…EIVAKIPAPE (183 aa)). GTP is bound by residues 14 to 19 (DHGKST) and 131 to 134 (NKID).

The protein belongs to the TRAFAC class translation factor GTPase superfamily. Classic translation factor GTPase family. LepA subfamily.

It is found in the cell inner membrane. The enzyme catalyses GTP + H2O = GDP + phosphate + H(+). Required for accurate and efficient protein synthesis under certain stress conditions. May act as a fidelity factor of the translation reaction, by catalyzing a one-codon backward translocation of tRNAs on improperly translocated ribosomes. Back-translocation proceeds from a post-translocation (POST) complex to a pre-translocation (PRE) complex, thus giving elongation factor G a second chance to translocate the tRNAs correctly. Binds to ribosomes in a GTP-dependent manner. This Haemophilus influenzae (strain 86-028NP) protein is Elongation factor 4.